The chain runs to 252 residues: 2-succinyl-6-hydroxy-2,4-cyclohexadiene-1-carboxylate synthase (252 aa).

This sequence belongs to the AB hydrolase superfamily. MenH family. Monomer.

The enzyme catalyses 5-enolpyruvoyl-6-hydroxy-2-succinyl-cyclohex-3-ene-1-carboxylate = (1R,6R)-6-hydroxy-2-succinyl-cyclohexa-2,4-diene-1-carboxylate + pyruvate. The protein operates within quinol/quinone metabolism; 1,4-dihydroxy-2-naphthoate biosynthesis; 1,4-dihydroxy-2-naphthoate from chorismate: step 3/7. It functions in the pathway quinol/quinone metabolism; menaquinone biosynthesis. In terms of biological role, catalyzes a proton abstraction reaction that results in 2,5-elimination of pyruvate from 2-succinyl-5-enolpyruvyl-6-hydroxy-3-cyclohexene-1-carboxylate (SEPHCHC) and the formation of 2-succinyl-6-hydroxy-2,4-cyclohexadiene-1-carboxylate (SHCHC). This Escherichia coli O81 (strain ED1a) protein is 2-succinyl-6-hydroxy-2,4-cyclohexadiene-1-carboxylate synthase.